The primary structure comprises 287 residues: Phosphatidylserine decarboxylase proenzyme (287 aa).

Catalysis depends on charge relay system; for autoendoproteolytic cleavage activity residues D89, H146, and S252. S252 functions as the Schiff-base intermediate with substrate; via pyruvic acid; for decarboxylase activity in the catalytic mechanism. S252 carries the post-translational modification Pyruvic acid (Ser); by autocatalysis.

This sequence belongs to the phosphatidylserine decarboxylase family. PSD-B subfamily. Prokaryotic type I sub-subfamily. Heterodimer of a large membrane-associated beta subunit and a small pyruvoyl-containing alpha subunit. Pyruvate is required as a cofactor. Is synthesized initially as an inactive proenzyme. Formation of the active enzyme involves a self-maturation process in which the active site pyruvoyl group is generated from an internal serine residue via an autocatalytic post-translational modification. Two non-identical subunits are generated from the proenzyme in this reaction, and the pyruvate is formed at the N-terminus of the alpha chain, which is derived from the carboxyl end of the proenzyme. The autoendoproteolytic cleavage occurs by a canonical serine protease mechanism, in which the side chain hydroxyl group of the serine supplies its oxygen atom to form the C-terminus of the beta chain, while the remainder of the serine residue undergoes an oxidative deamination to produce ammonia and the pyruvoyl prosthetic group on the alpha chain. During this reaction, the Ser that is part of the protease active site of the proenzyme becomes the pyruvoyl prosthetic group, which constitutes an essential element of the active site of the mature decarboxylase.

It is found in the cell membrane. It catalyses the reaction a 1,2-diacyl-sn-glycero-3-phospho-L-serine + H(+) = a 1,2-diacyl-sn-glycero-3-phosphoethanolamine + CO2. The protein operates within phospholipid metabolism; phosphatidylethanolamine biosynthesis; phosphatidylethanolamine from CDP-diacylglycerol: step 2/2. Its function is as follows. Catalyzes the formation of phosphatidylethanolamine (PtdEtn) from phosphatidylserine (PtdSer). The sequence is that of Phosphatidylserine decarboxylase proenzyme from Shewanella halifaxensis (strain HAW-EB4).